The chain runs to 254 residues: Putative cysteine-rich repeat secretory protein 37 (254 aa).

The signal sequence occupies residues 1 to 29 (MYSSYSLSKRLVSIPILAIQLLLIRSVSS). 2 Gnk2-homologous domains span residues 36–138 (YLNH…SIRS) and 145–251 (YRNV…LYPF).

The protein belongs to the cysteine-rich repeat secretory protein family.

The protein resides in the secreted. This is Putative cysteine-rich repeat secretory protein 37 (CRRSP37) from Arabidopsis thaliana (Mouse-ear cress).